The following is a 378-amino-acid chain: Chorismate synthase (378 aa).

Positions 42-61 (IQAELDRRRPGQSPITTPRQ) are disordered. NADP(+) is bound at residue R49. FMN is bound by residues 126–128 (RAS), G287, 302–306 (KPTAT), and R328.

Belongs to the chorismate synthase family. In terms of assembly, homotetramer. FMNH2 is required as a cofactor.

It catalyses the reaction 5-O-(1-carboxyvinyl)-3-phosphoshikimate = chorismate + phosphate. It functions in the pathway metabolic intermediate biosynthesis; chorismate biosynthesis; chorismate from D-erythrose 4-phosphate and phosphoenolpyruvate: step 7/7. Catalyzes the anti-1,4-elimination of the C-3 phosphate and the C-6 proR hydrogen from 5-enolpyruvylshikimate-3-phosphate (EPSP) to yield chorismate, which is the branch point compound that serves as the starting substrate for the three terminal pathways of aromatic amino acid biosynthesis. This reaction introduces a second double bond into the aromatic ring system. The protein is Chorismate synthase of Synechococcus sp. (strain JA-2-3B'a(2-13)) (Cyanobacteria bacterium Yellowstone B-Prime).